Here is a 318-residue protein sequence, read N- to C-terminus: MFYQSSSSLTQILHSFCGNTEMETPYPKLIDPSKTRIGWIGIGIMGSAMVSHIIAAGYSVTVYARDLRKTKDLQTKGARIANSPKELAEMSDVVFTIVGNFNDVRSLLLGDDGVLSGLTPGGVTVDMTSSKPGLAREIHAEARRRNCWAVDAPVSGGDAGAREGTLGIFAGGDSEIVEWLSPVMKNIGTVTYMGEAGSGQSCKIGNQIAGASNLVGLAEGIVFAEKAGLDTVKWLEAVKDGAAGSAVMRLFGEMIVKRDYRATGFAEYMVKDLGMAAEAAMPGAALSKQLFTGMVANGDGKLGIQGVVSVIRRLNGIS.

NAD(+) contacts are provided by residues 35-64 (TRIGWIGIGIMGSAMVSHIIAAGYSVTVYA) and Ser129. Lys203 is a catalytic residue. Lys271 contacts NAD(+).

The protein belongs to the HIBADH-related family. 3-hydroxyisobutyrate dehydrogenase subfamily.

Its subcellular location is the mitochondrion. It catalyses the reaction 3-hydroxy-2-methylpropanoate + NAD(+) = 2-methyl-3-oxopropanoate + NADH + H(+). It participates in amino-acid degradation; L-valine degradation. This chain is Probable 3-hydroxyisobutyrate dehydrogenase-like 3, mitochondrial, found in Arabidopsis thaliana (Mouse-ear cress).